We begin with the raw amino-acid sequence, 399 residues long: MSIFIHHGAPGSYKTSGALWLRLLPAIKSGRHIITNVRGLNLERMAKYLKMDVSDISIEFIDTDHPDGRLTMARFWHWARKDAFLFIDECGRIWPPRLTVTNLKALDTPPDLVAEDRPESFEVAFDMHRHHGWDICLTTPNIAKVHNMIREAAEIGYRHFNRATVGLGAKFTLTTHDAANSGQMDSHALTRQVKKIPSPIFKMYASTTTGKARDTMAGTALWKDRKILFLFGMVFLMFSYSFYGLHDNPIFTGGNDATIESEQSEPQSKATVGNAVGSKAVAPASFGFCIGRLCVQDGFVTVGDERYRLVDNLDIPYRGLWATGHHIYKDTLTVFFETESGSVPTELFASSYRYKVLPLPDFNHFVVFDTFAAQALWVEVKRGLPIKTENDKKGLNSIF.

Increases the permeability of the small intestine mucosa by affecting the structure of intercellular tight junctions (zonula occludens). The sequence is that of Zona occludens toxin (zot) from Vibrio cholerae serotype O1 (strain ATCC 39315 / El Tor Inaba N16961).